The following is a 1072-amino-acid chain: MEQQQSKNIVHVSKLFVCTAVDCKDDIEEKFERSFVTLQMQISGLSDKEMHDMLSQAVCKDKQHEEISIGFLYIMLTDPSMAPKTYRDVTLVSRDGMNGIVTNLTFLVAEKYTKLTEVARRQLIWLLREFVKHQVLSVENVIWNCLRQAGGGDVSSRNLFLIESLLDIFIEFRTWLEGNPFLVQSTVYSFVRLIEDHANPALMSLRQKEVKFTISLIRERFHDIIPLGRDFVRLLQNVARIPEFEQLWRDLIFNPKILHQTFNGIWQLLHIRTSRRFLQCRLLPEMERKISFLASSVKFGNQKRYQDWFQEKYFATPESHSLRSDLIRFIINVIHPTNDMLCSDIIPRWAIIGWLISSCTNPIASANAKLSLFYDWLFFDPAKDNIMNIEPGILVMYHSIRNHPFVSSTLLDFLCRITKNFFVKHEDKIRIGVYNSLKLILEKQVIPNLQPLFESPKLDRELRNLIRDNFREFLSPSANLGQLLYPSMHPAQGYIIKKESDQRILHCENMDLHETGLINTSGSNISMLDEDIKISLVPTDLEIESVFSDETAENLKRVHNIEENTDDDDDLPLSKVRLKEKPRVELAESIAESFDAFVTKRNSYTWEAFLKDFRPLPASAFEEFQLNYVISNTVLILRETLPQQNIFSESKTEEKHLAKSISYPLYGLFRFLYENDEKSKKPFQILLSEICEGIPEIGYLLLYFMKIYCKLQTRKNSQHSYQFKTTIYRQICDAVDEKIGNCLIRDLDLLEKENTNIFLWLLPDIYREFKSIATNNTDLLRITLRCIDAKNVRDILYSVAQGKLTIFKQDGLIDCIRESLDFETYEQFCLWQIVQAHDVPLRCIQDLLPELEAGSHPEALSHFLLLLKNEEPTNEIIRLMLSRETKSKGDPFVTSALRFWCQRYEEKLSEIIASLLTSKYPSSSPNKRKRPPKGISVSTSTPSADQVLNHLEHYRRSCRHGTGTGLYVHDMMQRALQSAYSHSNDSTKKQFSDLFALAAEEDTTVGRRGGSGRGRKQPGSKKDVSNHGTSKKNAEMVKTIYSSDENSSEEDWSKSKMTQTAKRRKKANNDSD.

Disordered stretches follow at residues 920–943 (YPSS…STPS) and 1002–1072 (DTTV…NDSD). Phosphoserine occurs at positions 1042, 1043, 1047, and 1048.

It belongs to the Integrator subunit 3 family. As to quaternary structure, belongs to the multiprotein complex Integrator, at least composed of IntS1, IntS2, IntS3, IntS4, omd/IntS5, IntS6, defl/IntS7, IntS8, IntS9, IntS10, IntS11, IntS12, asun/IntS13, IntS14 and IntS15. The core complex associates with protein phosphatase 2A subunits mts/PP2A and Pp2A-29B, to form the Integrator-PP2A (INTAC) complex.

It is found in the nucleus. The protein localises to the cytoplasm. Component of the integrator complex, a multiprotein complex that terminates RNA polymerase II (Pol II) transcription in the promoter-proximal region of genes. The integrator complex provides a quality checkpoint during transcription elongation by driving premature transcription termination of transcripts that are unfavorably configured for transcriptional elongation: the complex terminates transcription by (1) catalyzing dephosphorylation of the C-terminal domain (CTD) of Pol II subunit Polr2A/Rbp1 and Spt5, and (2) degrading the exiting nascent RNA transcript via endonuclease activity. The integrator complex is also involved in the 3'-end processing of the U7 snRNA, and also the spliceosomal snRNAs U1, U2, U4 and U5. This is Integrator complex subunit 3 homolog (IntS3) from Drosophila yakuba (Fruit fly).